The chain runs to 201 residues: MSYVPIVIEQTSRGERAYDIYSRLLKERIIFVCSTVEDHMANLVVAQLLFLEAENPKKDIYMYINSPGGVVTAGLAIYDTMQYIKPKVATLCIGQACSMGSLLLCGGEKGMRYSLPHSRIMIHQPSGGYRGQATDIEIHAQETLKIKRLLNELYSKHTGQELKHIEKSMERDNFMSPEEAKKFGIIDNIISSRDAMTMSAK.

Ser98 serves as the catalytic Nucleophile. The active site involves His123.

This sequence belongs to the peptidase S14 family. In terms of assembly, fourteen ClpP subunits assemble into 2 heptameric rings which stack back to back to give a disk-like structure with a central cavity, resembling the structure of eukaryotic proteasomes.

The protein localises to the cytoplasm. The enzyme catalyses Hydrolysis of proteins to small peptides in the presence of ATP and magnesium. alpha-casein is the usual test substrate. In the absence of ATP, only oligopeptides shorter than five residues are hydrolyzed (such as succinyl-Leu-Tyr-|-NHMec, and Leu-Tyr-Leu-|-Tyr-Trp, in which cleavage of the -Tyr-|-Leu- and -Tyr-|-Trp bonds also occurs).. Its function is as follows. Cleaves peptides in various proteins in a process that requires ATP hydrolysis. Has a chymotrypsin-like activity. Plays a major role in the degradation of misfolded proteins. The protein is ATP-dependent Clp protease proteolytic subunit of Rickettsia felis (strain ATCC VR-1525 / URRWXCal2) (Rickettsia azadi).